The sequence spans 221 residues: 7-cyano-7-deazaguanine synthase (221 aa).

8-18 (LSGGMDSAAVI) lines the ATP pocket. Residues Cys-186, Cys-196, Cys-199, and Cys-202 each contribute to the Zn(2+) site.

Belongs to the QueC family. Zn(2+) serves as cofactor.

The enzyme catalyses 7-carboxy-7-deazaguanine + NH4(+) + ATP = 7-cyano-7-deazaguanine + ADP + phosphate + H2O + H(+). Its pathway is purine metabolism; 7-cyano-7-deazaguanine biosynthesis. In terms of biological role, catalyzes the ATP-dependent conversion of 7-carboxy-7-deazaguanine (CDG) to 7-cyano-7-deazaguanine (preQ(0)). The protein is 7-cyano-7-deazaguanine synthase of Stenotrophomonas maltophilia (strain K279a).